Here is a 129-residue protein sequence, read N- to C-terminus: Small ribosomal subunit protein uS11 (129 aa).

Belongs to the universal ribosomal protein uS11 family. Part of the 30S ribosomal subunit. Interacts with proteins S7 and S18. Binds to IF-3.

Functionally, located on the platform of the 30S subunit, it bridges several disparate RNA helices of the 16S rRNA. Forms part of the Shine-Dalgarno cleft in the 70S ribosome. This chain is Small ribosomal subunit protein uS11, found in Psychromonas ingrahamii (strain DSM 17664 / CCUG 51855 / 37).